The chain runs to 397 residues: Riboflavin biosynthesis protein RibBA (397 aa).

The DHBP synthase stretch occupies residues 1 to 199 (MFHRIEEALE…IEDLIAYRRH (199 aa)). D-ribulose 5-phosphate is bound by residues 26 to 27 (RE), Asp31, 138 to 142 (RAGHT), and Glu162. A Mg(2+)-binding site is contributed by Glu27. Mg(2+) is bound at residue His141. The tract at residues 200-397 (HETLVTREAE…VNKLGHLLNL (198 aa)) is GTP cyclohydrolase II. 250-254 (RVHSE) contributes to the GTP binding site. Zn(2+) contacts are provided by Cys255, Cys266, and Cys268. GTP contacts are provided by residues Gln271, 293–295 (EGR), and Thr315. The active-site Proton acceptor; for GTP cyclohydrolase activity is the Asp327. Arg329 (nucleophile; for GTP cyclohydrolase activity) is an active-site residue. 2 residues coordinate GTP: Thr350 and Lys355.

The protein in the N-terminal section; belongs to the DHBP synthase family. In the C-terminal section; belongs to the GTP cyclohydrolase II family. Mg(2+) is required as a cofactor. The cofactor is Mn(2+). Requires Zn(2+) as cofactor.

It catalyses the reaction D-ribulose 5-phosphate = (2S)-2-hydroxy-3-oxobutyl phosphate + formate + H(+). It carries out the reaction GTP + 4 H2O = 2,5-diamino-6-hydroxy-4-(5-phosphoribosylamino)-pyrimidine + formate + 2 phosphate + 3 H(+). The protein operates within cofactor biosynthesis; riboflavin biosynthesis; 2-hydroxy-3-oxobutyl phosphate from D-ribulose 5-phosphate: step 1/1. It functions in the pathway cofactor biosynthesis; riboflavin biosynthesis; 5-amino-6-(D-ribitylamino)uracil from GTP: step 1/4. Its function is as follows. Catalyzes the conversion of D-ribulose 5-phosphate to formate and 3,4-dihydroxy-2-butanone 4-phosphate. In terms of biological role, catalyzes the conversion of GTP to 2,5-diamino-6-ribosylamino-4(3H)-pyrimidinone 5'-phosphate (DARP), formate and pyrophosphate. This chain is Riboflavin biosynthesis protein RibBA, found in Bacillus cereus (strain ATCC 14579 / DSM 31 / CCUG 7414 / JCM 2152 / NBRC 15305 / NCIMB 9373 / NCTC 2599 / NRRL B-3711).